Here is a 216-residue protein sequence, read N- to C-terminus: Protein Syd (216 aa).

Belongs to the Syd family.

The protein localises to the cell inner membrane. Functionally, interacts with the SecY protein in vivo. May bind preferentially to an uncomplexed state of SecY, thus functioning either as a chelating agent for excess SecY in the cell or as a regulatory factor that negatively controls the translocase function. In Shewanella sp. (strain MR-4), this protein is Protein Syd.